The primary structure comprises 220 residues: Probable nicotinate-nucleotide adenylyltransferase (220 aa).

This sequence belongs to the NadD family.

The enzyme catalyses nicotinate beta-D-ribonucleotide + ATP + H(+) = deamido-NAD(+) + diphosphate. The protein operates within cofactor biosynthesis; NAD(+) biosynthesis; deamido-NAD(+) from nicotinate D-ribonucleotide: step 1/1. Catalyzes the reversible adenylation of nicotinate mononucleotide (NaMN) to nicotinic acid adenine dinucleotide (NaAD). The sequence is that of Probable nicotinate-nucleotide adenylyltransferase from Yersinia enterocolitica serotype O:8 / biotype 1B (strain NCTC 13174 / 8081).